The primary structure comprises 466 residues: Argininosuccinate lyase (466 aa).

Belongs to the lyase 1 family. Argininosuccinate lyase subfamily.

The protein resides in the cytoplasm. It catalyses the reaction 2-(N(omega)-L-arginino)succinate = fumarate + L-arginine. It functions in the pathway amino-acid biosynthesis; L-arginine biosynthesis; L-arginine from L-ornithine and carbamoyl phosphate: step 3/3. The polypeptide is Argininosuccinate lyase (Microcystis aeruginosa (strain NIES-843 / IAM M-2473)).